The sequence spans 289 residues: Probable 2-keto-3-deoxyxylonate dehydratase (289 aa).

The Mg(2+) site is built by Glu-144, Glu-146, and Asp-164.

This sequence belongs to the FAH family.

It carries out the reaction 2-dehydro-3-deoxy-D-arabinonate = 2,5-dioxopentanoate + H2O. It participates in carbohydrate metabolism; D-xylose degradation. Its function is as follows. Probable 2-keto-3-deoxyxylonate dehydratase involved in the degradation of D-xylose, a major component of hemicelluloses such as xylan. Catalyzes the fourth reaction in the xylose utilization pathway through dehydratation of 2-dehydro-3-deoxy-D-xylonate into alpha-ketoglutarate semialdehyde (2,5-dioxopentanoate). This is Probable 2-keto-3-deoxyxylonate dehydratase from Haloferax volcanii (strain ATCC 29605 / DSM 3757 / JCM 8879 / NBRC 14742 / NCIMB 2012 / VKM B-1768 / DS2) (Halobacterium volcanii).